The primary structure comprises 142 residues: Hemoglobin larval subunit alpha (142 aa).

The 141-residue stretch at Val-2 to Arg-142 folds into the Globin domain. His-59 is an O2 binding site. His-88 serves as a coordination point for heme b.

Belongs to the globin family. Heterotetramer of two alpha chains and two beta chains. As to expression, red blood cells.

Involved in oxygen transport from the lung to the various peripheral tissues. This chain is Hemoglobin larval subunit alpha, found in Pleurodeles waltl (Iberian ribbed newt).